The chain runs to 314 residues: tRNA pseudouridine synthase B (314 aa).

His43 contacts substrate. The active-site Nucleophile is the Asp48. Tyr76, Tyr179, and Leu200 together coordinate substrate.

This sequence belongs to the pseudouridine synthase TruB family. Type 1 subfamily.

It carries out the reaction uridine(55) in tRNA = pseudouridine(55) in tRNA. Responsible for synthesis of pseudouridine from uracil-55 in the psi GC loop of transfer RNAs. This chain is tRNA pseudouridine synthase B, found in Escherichia coli O157:H7.